The primary structure comprises 59 residues: Large ribosomal subunit protein uL30 (59 aa).

Belongs to the universal ribosomal protein uL30 family. As to quaternary structure, part of the 50S ribosomal subunit.

The polypeptide is Large ribosomal subunit protein uL30 (Staphylococcus haemolyticus (strain JCSC1435)).